The chain runs to 509 residues: Dye-decolorizing peroxidase AauDyP1 (509 aa).

The first 22 residues, 1–22 (MRLSPVFVALLSGLLAADLGLA), serve as a signal peptide directing secretion. Residues 23 to 61 (RSVAPRVADSPAAVTGTRKTSLLKNVAGLPPVPSAAQVA) constitute a propeptide that is removed on maturation. The active-site Proton acceptor is the D229. N343 carries an N-linked (GlcNAc...) asparagine glycan. H365 lines the heme pocket. Residues N383, N410, and N476 are each glycosylated (N-linked (GlcNAc...) asparagine).

This sequence belongs to the DyP-type peroxidase family. Heme b is required as a cofactor.

The protein resides in the secreted. The enzyme catalyses Reactive Blue 5 + 2 H2O2 = 2,2'-disulfonyl azobenzene + 3-[(4-amino-6-chloro-1,3,5-triazin-2-yl)amino]benzenesulfonate + phthalate + 2 H2O + 2 H(+). The catalysed reaction is 2 a phenolic donor + H2O2 = 2 a phenolic radical donor + 2 H2O. With respect to regulation, inhibited by imidazole. Its function is as follows. Manganese-independent peroxidase that is able to convert a large number of compounds, but its physiological substrate is not known. In addition to classic peroxidase substrates (e.g. 2,6-dimethoxyphenol), oxidizes dyes such as Reactive Blue 5 and Reactive Black 5. This Auricularia auricula-judae (Judas ear fungus) protein is Dye-decolorizing peroxidase AauDyP1.